The sequence spans 810 residues: Transducer protein CosT (810 aa).

Over M1–K38 the chain is Cytoplasmic. Residues F39 to A59 form a helical membrane-spanning segment. Over D60 to T323 the chain is Extracellular. The helical transmembrane segment at G324–G344 threads the bilayer. The HAMP 1 domain occupies R345–D397. The Cytoplasmic portion of the chain corresponds to R345–D810. The tract at residues R403–A427 is disordered. Residues E414–A427 show a composition bias toward basic and acidic residues. Residues A439 to I493 form the HAMP 2 domain. The Methyl-accepting transducer domain maps to G512–A748. Glutamate methyl ester (Glu) occurs at positions 556 and 739. The interval S751 to G784 is disordered. The span at A755–E774 shows a compositional bias: low complexity. A compositionally biased stretch (polar residues) spans I775–G784.

Belongs to the methyl-accepting chemotaxis (MCP) protein family. Post-translationally, methylated by CheR.

The protein resides in the cell membrane. Mediates chemotaxis towards compatible osmolytes. Probably transduces the signal from the substrate-binding protein CosB to the histidine kinase CheA. The sequence is that of Transducer protein CosT (cosT) from Halobacterium salinarum (strain ATCC 700922 / JCM 11081 / NRC-1) (Halobacterium halobium).